The sequence spans 335 residues: UPF0353 protein MUL_1490 (335 aa).

2 consecutive transmembrane segments (helical) span residues W18 to L38 and I67 to T87. The VWFA domain occupies V98 to I298. The helical transmembrane segment at M309–I329 threads the bilayer.

The protein belongs to the UPF0353 family.

It is found in the cell membrane. The polypeptide is UPF0353 protein MUL_1490 (Mycobacterium ulcerans (strain Agy99)).